The following is a 108-amino-acid chain: MAQNIGLNVQPPKQECKDVNCPFHGTLPVRGQVITGKVVSDKMMGTVVVARDYLHYVRKYNRYEKRISKLHAHNPPCIQAKVGDLVKIAECRPLSKSTTYVVVEVQQP.

Belongs to the universal ribosomal protein uS17 family. Part of the 30S ribosomal subunit.

Functionally, one of the primary rRNA binding proteins, it binds specifically to the 5'-end of 16S ribosomal RNA. This Methanoregula boonei (strain DSM 21154 / JCM 14090 / 6A8) protein is Small ribosomal subunit protein uS17.